Reading from the N-terminus, the 405-residue chain is L-rhamnonate dehydratase (405 aa).

Residues His33 and Arg59 each contribute to the substrate site. Mg(2+)-binding residues include Asp226, Glu252, and Glu280. The active-site Proton acceptor is the His329. A substrate-binding site is contributed by Glu349.

The protein belongs to the mandelate racemase/muconate lactonizing enzyme family. RhamD subfamily. As to quaternary structure, homooctamer; tetramer of dimers. It depends on Mg(2+) as a cofactor.

It carries out the reaction L-rhamnonate = 2-dehydro-3-deoxy-L-rhamnonate + H2O. Its function is as follows. Catalyzes the dehydration of L-rhamnonate to 2-keto-3-deoxy-L-rhamnonate (KDR). The protein is L-rhamnonate dehydratase of Escherichia coli O127:H6 (strain E2348/69 / EPEC).